Reading from the N-terminus, the 132-residue chain is Ribosome-binding factor A (132 aa).

Residues glutamate 113–aspartate 132 form a disordered region.

Belongs to the RbfA family. As to quaternary structure, monomer. Binds 30S ribosomal subunits, but not 50S ribosomal subunits or 70S ribosomes.

Its subcellular location is the cytoplasm. Functionally, one of several proteins that assist in the late maturation steps of the functional core of the 30S ribosomal subunit. Associates with free 30S ribosomal subunits (but not with 30S subunits that are part of 70S ribosomes or polysomes). Required for efficient processing of 16S rRNA. May interact with the 5'-terminal helix region of 16S rRNA. The protein is Ribosome-binding factor A of Burkholderia cenocepacia (strain HI2424).